The chain runs to 146 residues: Universal stress protein A homolog 2 (146 aa).

This sequence belongs to the universal stress protein A family. Homodimer.

The protein localises to the cytoplasm. Functionally, involved in stress response. This is Universal stress protein A homolog 2 (uspA2) from Coxiella burnetii (strain RSA 493 / Nine Mile phase I).